The sequence spans 30 residues: Photosystem I reaction center subunit XII (30 aa).

The chain crosses the membrane as a helical span at residues 7 to 29; sequence LIAFFLAFTAGILAIKLGQALYD.

Belongs to the PsaM family.

Its subcellular location is the plastid. The protein localises to the chloroplast thylakoid membrane. The sequence is that of Photosystem I reaction center subunit XII from Pinus thunbergii (Japanese black pine).